Reading from the N-terminus, the 685-residue chain is Pentatricopeptide repeat-containing protein At5g19020, mitochondrial (685 aa).

A mitochondrion-targeting transit peptide spans 1-23 (MIKLIRFFRSRRCWVISLQARCF). 17 PPR repeats span residues 40–74 (TERA…GLDS), 75–105 (NGYI…HAKL), 106–136 (DSAS…MPER), 137–171 (SCVS…GIML), 172–206 (NEVT…KLEG), 207–237 (RVFV…MPER), 238–268 (NLVT…ITEK), 269–303 (DIVS…GMKP), 304–338 (SEVM…GFDC), 339–369 (YDFL…SVKD), 370–400 (HIAS…THDK), 401–435 (DIFS…SQVK), 437–471 (DAIT…TIPP), 472–502 (NDNL…TKNI), 506–540 (TISP…PIKP), 541–576 (NSIT…GIEP), and 577–607 (DIKH…MPVK). Positions 612-685 (IWGMLLSASR…EWSRAFSGVV (74 aa)) are type E motif; degenerate.

The protein belongs to the PPR family. PCMP-E subfamily.

Its subcellular location is the mitochondrion. This Arabidopsis thaliana (Mouse-ear cress) protein is Pentatricopeptide repeat-containing protein At5g19020, mitochondrial (PCMP-E42).